The primary structure comprises 88 residues: Apolipoprotein C-I (88 aa).

Residues 1-26 (MRLFISLPILIVVLAMALEGPAPAQA) form the signal peptide.

The protein belongs to the apolipoprotein C1 family.

The protein resides in the secreted. Functionally, inhibitor of lipoprotein binding to the low density lipoprotein (LDL) receptor, LDL receptor-related protein, and very low density lipoprotein (VLDL) receptor. Associates with high density lipoproteins (HDL) and the triacylglycerol-rich lipoproteins in the plasma and makes up about 10% of the protein of the VLDL and 2% of that of HDL. Appears to interfere directly with fatty acid uptake and is also the major plasma inhibitor of cholesteryl ester transfer protein (CETP). Modulates the interaction of APOE with beta-migrating VLDL and inhibits binding of beta-VLDL to the LDL receptor-related protein. Binds free fatty acids and reduces their intracellular esterification. This Neotoma lepida (Desert woodrat) protein is Apolipoprotein C-I (Apoc1).